A 333-amino-acid polypeptide reads, in one-letter code: T-cell surface glycoprotein CD1b1 (333 aa).

The signal sequence occupies residues 1 to 17; that stretch reads MLLVALALLAFLFPAGD. Residues 18–302 are Extracellular-facing; that stretch reads TQNALQWPTS…LYWGHSISIG (285 aa). Asn38, Asn75, and Asn146 each carry an N-linked (GlcNAc...) asparagine glycan. 3 cysteine pairs are disulfide-bonded: Cys120–Cys184, Cys149–Cys163, and Cys224–Cys279. Residues 197-295 enclose the Ig-like domain; it reads PDIQKQVKPD…LEGQDIILYW (99 aa). A helical transmembrane segment spans residues 303 to 323; the sequence is WIILAVLVPCLIVLVLFVLWF. The Cytoplasmic segment spans residues 324–333; sequence YRRWSYEDIL. The short motif at 329 to 332 is the Internalization signal element; sequence YEDI.

Heterodimer with B2M (beta-2-microglobulin). Interacts with saposin C.

The protein localises to the cell membrane. It is found in the endosome membrane. The protein resides in the lysosome membrane. In terms of biological role, antigen-presenting protein that binds self and non-self lipid and glycolipid antigens and presents them to T-cell receptors on natural killer T-cells. The protein is T-cell surface glycoprotein CD1b1 (CD1B1) of Cavia porcellus (Guinea pig).